Here is a 181-residue protein sequence, read N- to C-terminus: Ferredoxin C 2, chloroplastic (181 aa).

Residues 1-44 (MALILPCTFCTSLQKKNFPINRRYITNFRRGATTATCEFRIPVE) constitute a chloroplast transit peptide. The 2Fe-2S ferredoxin-type domain occupies 59-151 (HKVTVHDRQR…DLEVETQDED (93 aa)). Residues C97, C102, C105, and C135 each contribute to the [2Fe-2S] cluster site.

This sequence belongs to the 2Fe2S plant-type ferredoxin family. It depends on [2Fe-2S] cluster as a cofactor.

The protein resides in the plastid. Its subcellular location is the chloroplast. Its function is as follows. Ferredoxins are iron-sulfur proteins that transfer electrons in a wide variety of metabolic reactions. Mediates alternative electron partitioning in conditions of acceptor limitation at photosystem I. In Arabidopsis thaliana (Mouse-ear cress), this protein is Ferredoxin C 2, chloroplastic.